A 350-amino-acid chain; its full sequence is GTPase Obg (350 aa).

The 159-residue stretch at 1 to 159 (MKLVDEAEIL…RLLKLELKLL (159 aa)) folds into the Obg domain. One can recognise an OBG-type G domain in the interval 160–337 (ADVGLLGFPN…IMKDVMAFFD (178 aa)). Residues 166 to 173 (GFPNAGKS), 191 to 195 (FTTLY), 213 to 216 (DVPG), 287 to 290 (NKAD), and 318 to 320 (SAL) contribute to the GTP site. Residues Ser173 and Thr193 each coordinate Mg(2+).

This sequence belongs to the TRAFAC class OBG-HflX-like GTPase superfamily. OBG GTPase family. As to quaternary structure, monomer. Mg(2+) serves as cofactor.

It is found in the cytoplasm. Its function is as follows. An essential GTPase which binds GTP, GDP and possibly (p)ppGpp with moderate affinity, with high nucleotide exchange rates and a fairly low GTP hydrolysis rate. Plays a role in control of the cell cycle, stress response, ribosome biogenesis and in those bacteria that undergo differentiation, in morphogenesis control. This chain is GTPase Obg, found in Xanthomonas campestris pv. campestris (strain 8004).